The chain runs to 530 residues: Bifunctional purine biosynthesis protein PurH (530 aa).

The MGS-like domain maps to 1 to 148 (MNNARPIRRA…KNHKDVTIVV (148 aa)).

It belongs to the PurH family.

It carries out the reaction (6R)-10-formyltetrahydrofolate + 5-amino-1-(5-phospho-beta-D-ribosyl)imidazole-4-carboxamide = 5-formamido-1-(5-phospho-D-ribosyl)imidazole-4-carboxamide + (6S)-5,6,7,8-tetrahydrofolate. The catalysed reaction is IMP + H2O = 5-formamido-1-(5-phospho-D-ribosyl)imidazole-4-carboxamide. It functions in the pathway purine metabolism; IMP biosynthesis via de novo pathway; 5-formamido-1-(5-phospho-D-ribosyl)imidazole-4-carboxamide from 5-amino-1-(5-phospho-D-ribosyl)imidazole-4-carboxamide (10-formyl THF route): step 1/1. It participates in purine metabolism; IMP biosynthesis via de novo pathway; IMP from 5-formamido-1-(5-phospho-D-ribosyl)imidazole-4-carboxamide: step 1/1. The sequence is that of Bifunctional purine biosynthesis protein PurH from Aliivibrio fischeri (strain ATCC 700601 / ES114) (Vibrio fischeri).